We begin with the raw amino-acid sequence, 503 residues long: ATP synthase subunit alpha, chloroplastic (503 aa).

An ATP-binding site is contributed by 170–177; sequence GDRQTGKT.

This sequence belongs to the ATPase alpha/beta chains family. F-type ATPases have 2 components, CF(1) - the catalytic core - and CF(0) - the membrane proton channel. CF(1) has five subunits: alpha(3), beta(3), gamma(1), delta(1), epsilon(1). CF(0) has four main subunits: a, b, b' and c.

The protein localises to the plastid. It localises to the chloroplast thylakoid membrane. The enzyme catalyses ATP + H2O + 4 H(+)(in) = ADP + phosphate + 5 H(+)(out). In terms of biological role, produces ATP from ADP in the presence of a proton gradient across the membrane. The alpha chain is a regulatory subunit. The protein is ATP synthase subunit alpha, chloroplastic of Trieres chinensis (Marine centric diatom).